A 370-amino-acid chain; its full sequence is Cobalt-precorrin-5B C(1)-methyltransferase (370 aa).

This sequence belongs to the CbiD family.

The catalysed reaction is Co-precorrin-5B + S-adenosyl-L-methionine = Co-precorrin-6A + S-adenosyl-L-homocysteine. Its pathway is cofactor biosynthesis; adenosylcobalamin biosynthesis; cob(II)yrinate a,c-diamide from sirohydrochlorin (anaerobic route): step 6/10. Functionally, catalyzes the methylation of C-1 in cobalt-precorrin-5B to form cobalt-precorrin-6A. In Trichormus variabilis (strain ATCC 29413 / PCC 7937) (Anabaena variabilis), this protein is Cobalt-precorrin-5B C(1)-methyltransferase.